The chain runs to 536 residues: CRISPR-associated DNA-binding protein Cas12m (536 aa).

Residues 1–59 (MPFGKKARHVKAYQFGADAPQEGMEAVLEQHRLRTDYYNALVEMELRQREERTALLANL) are recognition domain (REC1-N). The recognition domain (REC2) stretch occupies residues 60 to 105 (AAESGLESPNQVYERLKAAGEKGIRKHPEYVAARERQKALYGHPRL). A recognition domain (REC1-C) region spans residues 106–159 (LELQSRQREERNALRRSFGAKGLYSSNYLDVERAFDKARQSPELRFRRYSPHEG). The wedge domain (WED) stretch occupies residues 160–257 (RLAVLYTEGL…RWTVSVVVEV (98 aa)). The tract at residues 258–270 (EGPPVASPTGRGA) is linker. Residues 271–481 (VAVDLGWRRV…QRGKPVRKLN (211 aa)) form a ruvC-I region. Positions 482-516 (PAHTTTDCHACGGALVGDPAKELRLYCPTCERFYD) are target nucleic-acid binding (TNB). Residues cysteine 489, cysteine 492, cysteine 508, and cysteine 511 each contribute to the Zn(2+) site. The ruvC-II stretch occupies residues 517-536 (QDENAARNLLRRAQEVQAQV). Aspartate 518 is a binding site for Mg(2+).

This sequence belongs to the CRISPR-associated DNA-binding protein Cas12m family. The cofactor is Mg(2+). Requires Zn(2+) as cofactor.

Its activity is regulated as follows. Pre-crRNA processing is inhibited by EDTA. Functionally, CRISPR (clustered regularly interspaced short palindromic repeat), is an adaptive immune system that provides protection against mobile genetic elements (viruses, transposable elements and conjugative plasmids). CRISPR clusters contain sequences complementary to antecedent mobile elements and target invading nucleic acids. CRISPR clusters are transcribed and processed into CRISPR RNA (crRNA). Recognizes a short motif in the CRISPR repeat sequences (the 5' PAM or protospacer adjacent motif, 5'-TT/CN-3' in this organism) to help distinguish self versus nonself, as targets within the bacterial CRISPR locus do not have PAMs. Cas12m-crRNA binds DNA in a PAM-dependent, crRNA-guided fashion. DNA-binding probably inhibits transcription, leading to gene silencing. No dsDNA, ssDNA or RNA nuclease activity is seen for the crRNA-Cas12m complex. Upon expression in E.coli as a CRISPR region preferentially binds to its associated crRNA. Is required to process pre-crRNA to mature crRNA without a tracrRNA; processing is Mg(2+)-dependent and does not require the predicted RuvC domain catalytic site. This chain is CRISPR-associated DNA-binding protein Cas12m, found in Allomeiothermus silvanus (strain ATCC 700542 / DSM 9946 / NBRC 106475 / NCIMB 13440 / VI-R2) (Thermus silvanus).